A 169-amino-acid polypeptide reads, in one-letter code: S-ribosylhomocysteine lyase (169 aa).

Fe cation contacts are provided by histidine 54, histidine 58, and cysteine 128.

The protein belongs to the LuxS family. Homodimer. Requires Fe cation as cofactor.

It carries out the reaction S-(5-deoxy-D-ribos-5-yl)-L-homocysteine = (S)-4,5-dihydroxypentane-2,3-dione + L-homocysteine. Involved in the synthesis of autoinducer 2 (AI-2) which is secreted by bacteria and is used to communicate both the cell density and the metabolic potential of the environment. The regulation of gene expression in response to changes in cell density is called quorum sensing. Catalyzes the transformation of S-ribosylhomocysteine (RHC) to homocysteine (HC) and 4,5-dihydroxy-2,3-pentadione (DPD). The polypeptide is S-ribosylhomocysteine lyase (Shewanella amazonensis (strain ATCC BAA-1098 / SB2B)).